The primary structure comprises 194 residues: Cysteine and glycine-rich protein 3 (194 aa).

Residues 1 to 5 are interaction with TCAP; the sequence is MPNWG. Residues 10-61 enclose the LIM zinc-binding 1 domain; that stretch reads CGACDKTVYHAEEIQCNGRSFHKTCFHCMACRKALDSTTVAAHESEIYCKVC. The Nuclear localization signal motif lies at 64-69; the sequence is RKYGPK. An interaction with CLF2 region spans residues 94-105; the sequence is QSPKPARAATTS. A phosphoserine mark is found at serine 95, serine 111, and serine 153. An LIM zinc-binding 2 domain is found at 120–171; that stretch reads CPRCGKSVYAAEKVMGGGKPWHKTCFPCAICGKSLESTNVTDKDGELYCKVC.

Self-associates. Oligomeric in the cytoplasm and monomeric in the nucleus. Homooligomers preferentially form along the actin cytoskeleton. Interacts with TCAP, ACTN2 and NRAP. Interacts with LDHD, SPTB, MYOD1, MYOG, MYF6. Interacts with GLRX3 (via C-terminus); GLRX3 and calcineurin compete for interaction with CSRP3. Interacts with CFL2; the stoichiometry influences F-actin depolymerization and possibly two molecules of CFL2 can interact with one molecule of CSRP3 resulting in the highest functional impact; the interaction is stronger with phosphorylated CFL2. Phosphorylated by PKC/PRKCA. High in striated muscle and adult heart.

Its subcellular location is the nucleus. It is found in the cytoplasm. The protein resides in the cytoskeleton. The protein localises to the myofibril. It localises to the sarcomere. Its subcellular location is the z line. Its function is as follows. Positive regulator of myogenesis. Acts as a cofactor for myogenic bHLH transcription factors such as MYOD1, and probably MYOG and MYF6. Enhances the DNA-binding activity of the MYOD1:TCF3 isoform E47 complex and may promote formation of a functional MYOD1:TCF3 isoform E47:MEF2A complex involved in myogenesis. Plays a crucial and specific role in the organization of cytosolic structures in cardiomyocytes. Could play a role in mechanical stretch sensing. May be a scaffold protein that promotes the assembly of interacting proteins at Z-line structures. It is essential for calcineurin anchorage to the Z line. Required for stress-induced calcineurin-NFAT activation. The role in regulation of cytoskeleton dynamics by association with CFL2 is reported conflictingly. Proposed to contribute to the maintenance of muscle cell integrity through an actin-based mechanism. Can directly bind to actin filaments, cross-link actin filaments into bundles without polarity selectivity and protect them from dilution- and cofilin-mediated depolymerization; the function seems to involve its self-association. In vitro can inhibit PKC/PRKCA activity. Proposed to be involved in cardiac stress signaling by down-regulating excessive PKC/PRKCA signaling. The chain is Cysteine and glycine-rich protein 3 (Csrp3) from Rattus norvegicus (Rat).